We begin with the raw amino-acid sequence, 303 residues long: Epimerase family protein YfhF (303 aa).

This sequence belongs to the NAD(P)-dependent epimerase/dehydratase family. SDR39U1 subfamily.

The sequence is that of Epimerase family protein YfhF (yfhF) from Bacillus subtilis (strain 168).